A 300-amino-acid polypeptide reads, in one-letter code: MNRLLVIAGPTASGKTALAVALARRLGGEIVNADSQQVYRGLDVGTAKPTAAERAAVPHHLLDVAEAGEGMDAARFAALADAAIADVAARGRLPIVAGGTGLYLRALLHGVVAAPGRDAALRARLEEEAARLGRPALHARLAALDPDAAARIRPNDLVRIVRALEIAAGGTRPSELYARHAFREDRYAARLLALDPPRASLHARIDARVAEMFAGGLLEEARALAARFGDALPPKLPIGYAEAIGCVRGELQLAEAVRRVQVAHRRYARRQVIWLRRERGVEWIAPPFDADDLARRVENG.

9–16 (GPTASGKT) contacts ATP. A substrate-binding site is contributed by 11-16 (TASGKT). The interval 34-37 (DSQQ) is interaction with substrate tRNA.

The protein belongs to the IPP transferase family. As to quaternary structure, monomer. The cofactor is Mg(2+).

The enzyme catalyses adenosine(37) in tRNA + dimethylallyl diphosphate = N(6)-dimethylallyladenosine(37) in tRNA + diphosphate. In terms of biological role, catalyzes the transfer of a dimethylallyl group onto the adenine at position 37 in tRNAs that read codons beginning with uridine, leading to the formation of N6-(dimethylallyl)adenosine (i(6)A). This chain is tRNA dimethylallyltransferase, found in Anaeromyxobacter sp. (strain Fw109-5).